Consider the following 206-residue polypeptide: MHSAVEKVAEDLSLSRENLSLEEVEKAIRTLLLWVGENPDREGLLETPKRIAKVYKELFSGYGESVDEILGVVFEEVAGYDEPVIVKDIFFYSHCEHHMIPIIGKAHVAYLPDKKIVGLSKIARVVDVFAHRLQTQETMTAQVANSLKKYLKPRGLAVLIEAEHMCMAMRGVQKQGAATITTSFHGYYKKDQVAQANFMTITRGIR.

3 residues coordinate Zn(2+): Cys-95, His-98, and Cys-166.

It belongs to the GTP cyclohydrolase I family. As to quaternary structure, toroid-shaped homodecamer, composed of two pentamers of five dimers.

The enzyme catalyses GTP + H2O = 7,8-dihydroneopterin 3'-triphosphate + formate + H(+). It participates in cofactor biosynthesis; 7,8-dihydroneopterin triphosphate biosynthesis; 7,8-dihydroneopterin triphosphate from GTP: step 1/1. The protein is GTP cyclohydrolase 1 of Bartonella bacilliformis (strain ATCC 35685 / KC583 / Herrer 020/F12,63).